Here is a 588-residue protein sequence, read N- to C-terminus: D-3-phosphoglycerate dehydrogenase 3, chloroplastic (588 aa).

Residues M1–S38 constitute a chloroplast transit peptide. Residues K195–V196, D215, V274–R276, and D300 contribute to the NAD(+) site. R276 is an active-site residue. E305 is a catalytic residue. The Proton donor role is filled by H324. H324–A327 contacts NAD(+). An ACT domain is found at V516–L588.

Belongs to the D-isomer specific 2-hydroxyacid dehydrogenase family. As to expression, expressed in aerial parts. Not detected in roots and meristematic tissue. Expressed in cotyledons, adult leaves, stigma and anther filaments. Detected in the embryo.

The protein resides in the plastid. It localises to the chloroplast. The catalysed reaction is (2R)-3-phosphoglycerate + NAD(+) = 3-phosphooxypyruvate + NADH + H(+). Its pathway is amino-acid biosynthesis; L-serine biosynthesis; L-serine from 3-phospho-D-glycerate: step 1/3. Its activity is regulated as follows. Partially inhibited by 1 mM serine. Its function is as follows. Involved in the plastidial phosphorylated pathway of serine biosynthesis (PPSB). The sequence is that of D-3-phosphoglycerate dehydrogenase 3, chloroplastic (PGDH3) from Arabidopsis thaliana (Mouse-ear cress).